A 626-amino-acid chain; its full sequence is DNA primase (626 aa).

A CHC2-type zinc finger spans residues 39-63; sequence CPFHGEKTPSFSVSPEKQIFHCFGC. Residues 264–346 enclose the Toprim domain; sequence EEITLMEGFM…DVFVLQLPAG (83 aa). Positions 270, 314, and 316 each coordinate Mg(2+).

It belongs to the DnaG primase family. As to quaternary structure, monomer. Interacts with DnaB. Zn(2+) serves as cofactor. The cofactor is Mg(2+).

It carries out the reaction ssDNA + n NTP = ssDNA/pppN(pN)n-1 hybrid + (n-1) diphosphate.. RNA polymerase that catalyzes the synthesis of short RNA molecules used as primers for DNA polymerase during DNA replication. The polypeptide is DNA primase (Listeria monocytogenes serovar 1/2a (strain ATCC BAA-679 / EGD-e)).